Here is a 306-residue protein sequence, read N- to C-terminus: ADP-polyphosphate phosphotransferase 2 (306 aa).

Belongs to the polyphosphate kinase 2 (PPK2) family. Class I subfamily.

The enzyme catalyses [phosphate](n) + ATP = [phosphate](n+1) + ADP. It catalyses the reaction [phosphate](n) + GTP = [phosphate](n+1) + GDP. In terms of biological role, uses inorganic polyphosphate (polyP) as a donor to convert ADP to ATP. Can also convert GDP to GTP, with lower efficiency. The protein is ADP-polyphosphate phosphotransferase 2 of Rhizobium meliloti (strain 1021) (Ensifer meliloti).